Reading from the N-terminus, the 361-residue chain is Chitin synthase export chaperone (361 aa).

A run of 7 helical transmembrane segments spans residues 48-68 (IIFQPATCILHIAALVMATIM), 86-106 (LFFYMYIWVELFAIFLDSAII), 119-139 (IYAGSVGALYWCLLLNGFVGF), 150-170 (LWFLRISSLVVGAVCFGIPVA), 184-204 (TVGLFITYLVFPCVCVLIYFI), 218-238 (WVIGDLLFMAGFYIAGVLLLV), and 250-270 (HYVDGVFFSTLAFLFAVMMVY).

The protein belongs to the CHS7 family. Interacts with CHS3.

The protein localises to the endoplasmic reticulum membrane. Its function is as follows. Chaperone required for the export of the chitin synthase CHS3 from the endoplasmic reticulum. This Cryptococcus neoformans var. neoformans serotype D (strain JEC21 / ATCC MYA-565) (Filobasidiella neoformans) protein is Chitin synthase export chaperone (CHS7).